Consider the following 198-residue polypeptide: Large ribosomal subunit protein uL24c (198 aa).

The N-terminal 50 residues, 1 to 50 (MATMSALQSSFTSLSLSPSSSFLGQRLISPISLSVTSPVKPAENPCLVLA), are a transit peptide targeting the chloroplast.

This sequence belongs to the universal ribosomal protein uL24 family. As to quaternary structure, part of the 50S ribosomal subunit.

The protein resides in the plastid. It localises to the chloroplast. In terms of biological role, one of two assembly initiator proteins, it binds directly to the 5'-end of the 23S rRNA, where it nucleates assembly of the 50S subunit. Required for optimal plastid performance in terms of photosynthesis and growth. Required for the translation of plastid mRNAs. Plays a critical role in biosynthesis of thylakoid membrane proteins encoded by chloroplast genes. The sequence is that of Large ribosomal subunit protein uL24c (RPL24) from Arabidopsis thaliana (Mouse-ear cress).